The sequence spans 261 residues: 14-3-3 protein 8 (261 aa).

Residues 237–261 (DIPEDGEEAPKGDAANKVGAGEDAE) form a disordered region.

It belongs to the 14-3-3 family. As to quaternary structure, homodimer.

This Solanum lycopersicum (Tomato) protein is 14-3-3 protein 8 (TFT8).